The primary structure comprises 784 residues: Alpha-catulin (784 aa).

The interval 35 to 247 (IKTKSIEQTL…LLLTASKTYL (213 aa)) is vinculin/alpha-catenin homology 1 (VH1) region. Positions 387–414 (ASGLEVTVERLNRRLKDLSKQLQIVAME) form a coiled coil. The segment at 552–696 (PRPGKHGTTQ…MVKSPTVGKT (145 aa)) is vinculin/alpha-catenin homology 2 (VH2) region. The segment at 737–784 (GSVNGRTGADGERTSRESTVWRRTPSIRRAAPPTSSHLSANNSSSIHI) is disordered. Positions 745-756 (ADGERTSRESTV) are enriched in basic and acidic residues. Residues 771–784 (SSHLSANNSSSIHI) are compositionally biased toward low complexity.

This sequence belongs to the vinculin/alpha-catenin family. As to quaternary structure, interacts with slo-1 (via C-terminus); the interaction is required for localization of slo-1 to dense bodies in body wall muscle cells. Interacts (via N-terminus) with dystrophin complex member dyb-1 (via C-terminus); the interaction is required for localization of the dystrophin complex and ctn-1 near dense bodies in muscle cells. In terms of tissue distribution, expressed in body wall muscles, vulval muscles, stomatointestinal cells and pharyngeal muscle cells. Expressed in enteric muscles, nerve ring neurons and in the ventral nerve cord.

The protein localises to the cytoplasm. Its function is as follows. Required for slo-1 potassium ion channel clustering at presynaptic terminals and in egg-laying muscles; clustering of slo-1 mediates the intoxicating and sedatory effects of ethanol on worms. Required for slo-1 localization to dense bodies in body wall muscle cells. Maintains the localization of the dystrophin complex near muscle cell dense bodies via its interaction with complex member dyb-1 which is required for slo-1 localization in muscle while slo-1 localization in neurons is independent of the dystrophin complex. This is Alpha-catulin from Caenorhabditis elegans.